The following is a 397-amino-acid chain: uncharacterized protein (397 aa).

12 helical membrane-spanning segments follow: residues 10–30, 48–68, 76–96, 106–126, 141–161, 165–185, 209–229, 242–262, 274–294, 296–316, 334–354, and 363–383; these read FIIFVLMICTFSIGYTEYAVM, GLLVTAYAASVCLTGPLVTII, PVLLGLMAIFILSNLMSALAP, ILSASIHGAFFAIAMVFASEM, GGLTVALMLGVPFGSYLGDVL, AVFSIITALGVIGFLGLMAAV, LFSFAITILGYSGVFIAYTFI, VGITGALFAYGLGGVAGNFFA, MIGVMIGLIGVLAVFPYIAIY, AAAIVATFLFGACAFGTPPLL, VSVSAFNLANALGAWIGGMIL, and LFAGGALMTACGLVLSTFAHL.

Belongs to the major facilitator superfamily.

The protein resides in the cell membrane. This is an uncharacterized protein from Bacillus subtilis (strain 168).